Reading from the N-terminus, the 885-residue chain is Sensor histidine kinase KdpD (885 aa).

The next 4 membrane-spanning stretches (helical) occupy residues 384–404 (AIDM…GLWI), 415–435 (IILM…RSFI), 436–456 (IGFL…TEPR), and 464–484 (FDYP…SALL). The region spanning 660 to 880 (SISHDIRTPL…IFYFNIYTDF (221 aa)) is the Histidine kinase domain. Position 663 is a phosphohistidine; by autocatalysis (H663).

It is found in the membrane. The catalysed reaction is ATP + protein L-histidine = ADP + protein N-phospho-L-histidine.. With respect to regulation, cyclic di-AMP is a negative regulator of the Kdp system. Its function is as follows. Member of the two-component regulatory system KdpD/KdpE that regulates the transcription of a series of virulence factors through sensing external K(+) concentrations. Also regulates capsular polysaccharide production. May function as a membrane-associated protein kinase that phosphorylates KdpE in response to environmental signals. In turn, KpdE functions as a transcriptional regulator by direct binding to promoter regions of target genes including spa, hla, aur and geh. This is Sensor histidine kinase KdpD from Staphylococcus aureus (strain NCTC 8325 / PS 47).